The chain runs to 352 residues: MLTLSDFDFDLPPELIAQVALPERSASRLLEVDNPAGAAGPARLIDRRFAELPECIAPGDLLVFNDTKVLKARFLGQKASGGKIEVLVERLTGERTALAQIRASKSPQPGTTIRLADAFDVTVGERVEPFYTLHFPDDCLTLIEQFGRLPLPPYIEHDPDSTDETRYQTVFAQNPGAVAAPTAGLHFDDALLARLDEKGVERATLTLHVGAGTFQPVRVENLAEHKMHSEWYHLPQALADKIAATRARGNRVIAVGTTSMRALEAAARDAEAAGRPLAAASTETDIFITPGYKFRVVDRLVTNFHLPKSTLLMLVSAFAGVETIRETYRHAIEQRYRFFSYGDAMLLTRRDA.

This sequence belongs to the QueA family. As to quaternary structure, monomer.

The protein localises to the cytoplasm. The catalysed reaction is 7-aminomethyl-7-carbaguanosine(34) in tRNA + S-adenosyl-L-methionine = epoxyqueuosine(34) in tRNA + adenine + L-methionine + 2 H(+). The protein operates within tRNA modification; tRNA-queuosine biosynthesis. Functionally, transfers and isomerizes the ribose moiety from AdoMet to the 7-aminomethyl group of 7-deazaguanine (preQ1-tRNA) to give epoxyqueuosine (oQ-tRNA). In Paraburkholderia phytofirmans (strain DSM 17436 / LMG 22146 / PsJN) (Burkholderia phytofirmans), this protein is S-adenosylmethionine:tRNA ribosyltransferase-isomerase.